Here is a 346-residue protein sequence, read N- to C-terminus: Extracellular protease (346 aa).

The signal sequence occupies residues 1–21 (MMKATPIALLLAGVLASPLCA). Residue histidine 296 coordinates Zn(2+). Residue glutamate 297 is part of the active site. Residues histidine 300 and aspartate 309 each contribute to the Zn(2+) site.

Belongs to the peptidase M35 family. Requires Zn(2+) as cofactor.

Functionally, heat-labile protease. In Aeromonas hydrophila, this protein is Extracellular protease.